Here is a 127-residue protein sequence, read N- to C-terminus: Small ribosomal subunit protein eS8 (127 aa).

The disordered stretch occupies residues 1-31 (MTIFQGKSGKKATGGSLKQSRKKRRFELGRE).

It belongs to the eukaryotic ribosomal protein eS8 family. In terms of assembly, part of the 30S ribosomal subunit.

This chain is Small ribosomal subunit protein eS8 (rps8e), found in Thermoplasma acidophilum (strain ATCC 25905 / DSM 1728 / JCM 9062 / NBRC 15155 / AMRC-C165).